A 206-amino-acid chain; its full sequence is Small ribosomal subunit protein uS4 (206 aa).

The segment covering 1–16 (MTKRQESKYKIDRRMG) has biased composition (basic and acidic residues). Residues 1 to 46 (MTKRQESKYKIDRRMGENIWGRPKSPVNRREYGPGQHGQRRKGKLS) are disordered. The 61-residue stretch at 94–154 (RRLDAVVYRA…EKSKQLAIVL (61 aa)) folds into the S4 RNA-binding domain.

The protein belongs to the universal ribosomal protein uS4 family. As to quaternary structure, part of the 30S ribosomal subunit. Contacts protein S5. The interaction surface between S4 and S5 is involved in control of translational fidelity.

In terms of biological role, one of the primary rRNA binding proteins, it binds directly to 16S rRNA where it nucleates assembly of the body of the 30S subunit. With S5 and S12 plays an important role in translational accuracy. This Parvibaculum lavamentivorans (strain DS-1 / DSM 13023 / NCIMB 13966) protein is Small ribosomal subunit protein uS4.